The chain runs to 125 residues: Phosphoribosyl-AMP cyclohydrolase (125 aa).

Aspartate 74 lines the Mg(2+) pocket. Cysteine 75 lines the Zn(2+) pocket. Aspartate 76 and aspartate 78 together coordinate Mg(2+). 2 residues coordinate Zn(2+): cysteine 92 and cysteine 99.

Belongs to the PRA-CH family. As to quaternary structure, homodimer. Mg(2+) is required as a cofactor. Requires Zn(2+) as cofactor.

It localises to the cytoplasm. It carries out the reaction 1-(5-phospho-beta-D-ribosyl)-5'-AMP + H2O = 1-(5-phospho-beta-D-ribosyl)-5-[(5-phospho-beta-D-ribosylamino)methylideneamino]imidazole-4-carboxamide. The protein operates within amino-acid biosynthesis; L-histidine biosynthesis; L-histidine from 5-phospho-alpha-D-ribose 1-diphosphate: step 3/9. Catalyzes the hydrolysis of the adenine ring of phosphoribosyl-AMP. The polypeptide is Phosphoribosyl-AMP cyclohydrolase (Geobacter metallireducens (strain ATCC 53774 / DSM 7210 / GS-15)).